The following is an 894-amino-acid chain: Protein SEY1 (894 aa).

A disordered region spans residues 1–64 (MGLDVDSVPI…PRALEPAQVT (64 aa)). The Cytoplasmic portion of the chain corresponds to 1 to 768 (MGLDVDSVPI…KRGTVSSMSQ (768 aa)). Over residues 9–24 (PIAEAAAPSSMAATEP) the composition is skewed to low complexity. Over residues 40-53 (APMNTDSSRETMPT) the composition is skewed to polar residues. Positions 137 to 359 (GFGYDICAVL…DESYVFKTEY (223 aa)) constitute a GB1/RHD3-type G domain. 147–154 (GSQSTGKS) is a binding site for GTP. Residues 536-559 (KVDDERAQLLDELHTLARTLRANE) adopt a coiled-coil conformation. The chain crosses the membrane as a helical span at residues 769–789 (VPIWMYGVLVVLGWNEAMAVL). Over 790–792 (RNP) the chain is Lumenal. The chain crosses the membrane as a helical span at residues 793–813 (VYFTLLCMVLATAYVIWRLNL). Topologically, residues 814–894 (GTPVLALASG…DSHPRLPASF (81 aa)) are cytoplasmic. Residues 841 to 894 (DGTPPSANRAREYRVPSGSTAHVSEKTPHRPLTTSGAAEADTVEDSHPRLPASF) are disordered.

It belongs to the TRAFAC class dynamin-like GTPase superfamily. GB1/RHD3 GTPase family. RHD3 subfamily.

Its subcellular location is the endoplasmic reticulum membrane. Cooperates with the reticulon proteins and tubule-shaping DP1 family proteins to generate and maintain the structure of the tubular endoplasmic reticulum network. Has GTPase activity, which is required for its function in ER organization. In Malassezia globosa (strain ATCC MYA-4612 / CBS 7966) (Dandruff-associated fungus), this protein is Protein SEY1.